Here is a 1133-residue protein sequence, read N- to C-terminus: MGMFNCLHGNNMSGQHDIPPEVGEQPEQEPLEAPGAAAPGAGAGPAEEMATEPDSEPSNNEPVPDETGSEISGPPEDSKSDIQSPCQAFEEVRVGGDYSPPPEEAMPFETQQPSLGDFWPTLEQPGPSGTPSGLQAFNPAILEPGTPTGASPGLGAYTPPPEEAMPFEFNEPAQGDHSQPPLQVPDLAPGGPEALVPRALPAEPGNIRFENAGFREDYSPPPEESVPFQVGGEEFGGDSPPPGLPRVIPQIGIGGEFPTVAVPSALCLAPAENAPPLWVRGAIDRPFREAVRSPPNFACDSPPMEITRPLLEIGRASIGVDDDTAVNMDSPPIASDGPPIEVSGAPDKSECAERPPVEREAAEMEGSPTTATAVEGKVPSPERGDGSSTQPEAMDAKPAPAAQAVSTGSDAGAPTDSAMLTDSQSDAGEDGTAPGTPSDLQSDPEELEEAPAVRADPDGGAAPVAPATPAESESEGSRDPAAEPASEAVPATTAESASGAAPVTQVEPAAAAVSATLAEPAARAAPITPKEPTTRAVPSARAHPAAGAVPGAPAMSASARAAAARAAYAGPLVWGARSLSATPAARASLPARAAAAARAASAARAVAAGRSASAAPSRAHLRPPSPEIQVADPPTPRPPPRPTAWPDKYERGRSCCRYEASSGICEIESSSDESEEGATGCFQWLLRRNRRPGLPRSHTVGSNPVRNFFTRAFGSCFGLSECTRSRSLSPGKAKDPMEERRKQMRKEAIEMREQKRADKKRSKLIDKQLEEEKMDYMCTHRLLLLGAGESGKSTIVKQMRILHVNGFNGEGGEEDPQAARSNSDGEKATKVQDIKNNLKEAIETIVAAMSNLVPPVELANPENQFRVDYILSVMNVPNFDFPPEFYEHAKALWEDEGVRACYERSNEYQLIDCAQYFLDKIDVIKQADYVPSDQDLLRCRVLTSGIFETKFQVDKVNFHMFDVGGQRDERRKWIQCFNDVTAIIFVVASSSYNMVIREDNQTNRLQEALNLFKSIWNNRWLRTISVILFLNKQDLLAEKVLAGKSKIEDYFPEFARYTTPEDATPEPGEDPRVTRAKYFIRDEFLRISTASGDGRHYCYPHFTCAVDTENIRRVFNDCRDIIQRMHLRQYELL.

4 disordered regions span residues 1–195 (MGMF…PEAL), 322–552 (DDTA…VPGA), 611–648 (SASAAPSRAHLRPPSPEIQVADPPTPRPPPRPTAWPDK), and 724–744 (RSRSLSPGKAKDPMEERRKQM). Residues 31 to 48 (LEAPGAAAPGAGAGPAEE) are compositionally biased toward low complexity. The segment covering 347-362 (DKSECAERPPVEREAA) has biased composition (basic and acidic residues). Low complexity-rich tracts occupy residues 391–404 (PEAMDAKPAPAAQA), 459–471 (GGAAPVAPATPAE), 482–498 (AEPASEAVPATTAESAS), 515–525 (ATLAEPAARAA), and 535–552 (RAVPSARAHPAAGAVPGA). Pro residues predominate over residues 633–643 (PPTPRPPPRPT). Residues 732-744 (KAKDPMEERRKQM) are compositionally biased toward basic and acidic residues. The stretch at 737–761 (MEERRKQMRKEAIEMREQKRADKKR) forms a coiled coil. The region spanning 778–1133 (CTHRLLLLGA…RMHLRQYELL (356 aa)) is the G-alpha domain. The segment at 781–794 (RLLLLGAGESGKST) is G1 motif. 786-794 (GAGESGKST) serves as a coordination point for GTP. Residue Ser-793 participates in Mg(2+) binding. The tract at residues 807 to 828 (FNGEGGEEDPQAARSNSDGEKA) is disordered. Residues 935-943 (DLLRCRVLT) are G2 motif. Residues 936–943 (LLRCRVLT), 962–966 (DVGGQ), and 1031–1034 (NKQD) each bind GTP. An ADP-ribosylarginine; by cholera toxin modification is found at Arg-940. Residue Thr-943 participates in Mg(2+) binding. The G3 motif stretch occupies residues 958–967 (FHMFDVGGQR). The segment at 1027-1034 (ILFLNKQD) is G4 motif. At Ser-1091 the chain carries Phosphoserine. Positions 1103 to 1108 (TCAVDT) are G5 motif. Residue Ala-1105 coordinates GTP.

Belongs to the G-alpha family. G(s) subfamily. G proteins are composed of 3 units; alpha, beta and gamma. The alpha chain contains the guanine nucleotide binding site. Interacts through its N-terminal region with ALEX which is produced from the same locus in a different open reading frame. This interaction may inhibit its adenylyl cyclase-stimulating activity. Interacts with MAGED2.

The protein resides in the cell membrane. The protein localises to the apical cell membrane. The catalysed reaction is GTP + H2O = GDP + phosphate + H(+). Functionally, guanine nucleotide-binding proteins (G proteins) function as transducers in numerous signaling pathways controlled by G protein-coupled receptors (GPCRs). The alpha chain contains the guanine nucleotide binding site and alternates between an active, GTP-bound state and an inactive, GDP-bound state. Signaling by an activated GPCR promotes GDP release and GTP binding. The alpha subunit has a low GTPase activity that converts bound GTP to GDP, thereby terminating the signal. Both GDP release and GTP hydrolysis are modulated by numerous regulatory proteins. Signaling involves the activation of adenylyl cyclases, resulting in increased levels of the signaling molecule cAMP. GNAS functions downstream of several GPCRs, including beta-adrenergic receptors. XLas isoforms interact with the same set of receptors as Gnas isoforms. The sequence is that of Guanine nucleotide-binding protein G(s) subunit alpha isoforms XLas from Mus musculus (Mouse).